A 397-amino-acid chain; its full sequence is Chorismate synthase (397 aa).

The NADP(+) site is built by R40 and R46. FMN contacts are provided by residues 129 to 131, 257 to 258, G302, 317 to 321, and R343; these read RSS, QA, and KPISS.

This sequence belongs to the chorismate synthase family. As to quaternary structure, homotetramer. The cofactor is FMNH2.

It carries out the reaction 5-O-(1-carboxyvinyl)-3-phosphoshikimate = chorismate + phosphate. Its pathway is metabolic intermediate biosynthesis; chorismate biosynthesis; chorismate from D-erythrose 4-phosphate and phosphoenolpyruvate: step 7/7. Its function is as follows. Catalyzes the anti-1,4-elimination of the C-3 phosphate and the C-6 proR hydrogen from 5-enolpyruvylshikimate-3-phosphate (EPSP) to yield chorismate, which is the branch point compound that serves as the starting substrate for the three terminal pathways of aromatic amino acid biosynthesis. This reaction introduces a second double bond into the aromatic ring system. This chain is Chorismate synthase, found in Chlorobium limicola (strain DSM 245 / NBRC 103803 / 6330).